We begin with the raw amino-acid sequence, 155 residues long: Protein-export protein SecB (155 aa).

It belongs to the SecB family. Homotetramer, a dimer of dimers. One homotetramer interacts with 1 SecA dimer.

The protein resides in the cytoplasm. One of the proteins required for the normal export of preproteins out of the cell cytoplasm. It is a molecular chaperone that binds to a subset of precursor proteins, maintaining them in a translocation-competent state. It also specifically binds to its receptor SecA. The chain is Protein-export protein SecB from Albidiferax ferrireducens (strain ATCC BAA-621 / DSM 15236 / T118) (Rhodoferax ferrireducens).